Here is a 302-residue protein sequence, read N- to C-terminus: 4-hydroxy-tetrahydrodipicolinate synthase (302 aa).

T55 serves as a coordination point for pyruvate. The Proton donor/acceptor role is filled by Y143. Catalysis depends on K171, which acts as the Schiff-base intermediate with substrate. Pyruvate is bound at residue I213.

The protein belongs to the DapA family. Homotetramer; dimer of dimers.

The protein localises to the cytoplasm. The catalysed reaction is L-aspartate 4-semialdehyde + pyruvate = (2S,4S)-4-hydroxy-2,3,4,5-tetrahydrodipicolinate + H2O + H(+). Its pathway is amino-acid biosynthesis; L-lysine biosynthesis via DAP pathway; (S)-tetrahydrodipicolinate from L-aspartate: step 3/4. Its function is as follows. Catalyzes the condensation of (S)-aspartate-beta-semialdehyde [(S)-ASA] and pyruvate to 4-hydroxy-tetrahydrodipicolinate (HTPA). This is 4-hydroxy-tetrahydrodipicolinate synthase from Psychrobacter sp. (strain PRwf-1).